A 380-amino-acid polypeptide reads, in one-letter code: Queuine tRNA-ribosyltransferase (380 aa).

Aspartate 96 (proton acceptor) is an active-site residue. Substrate is bound by residues 96 to 100, aspartate 150, glutamine 193, and glycine 220; that span reads DSGGF. The interval 251 to 257 is RNA binding; the sequence is GVGAPDS. The active-site Nucleophile is the aspartate 270. The RNA binding; important for wobble base 34 recognition stretch occupies residues 275–279; it reads TRIAR. Residues cysteine 308, cysteine 310, cysteine 313, and histidine 339 each coordinate Zn(2+).

It belongs to the queuine tRNA-ribosyltransferase family. Homodimer. Within each dimer, one monomer is responsible for RNA recognition and catalysis, while the other monomer binds to the replacement base PreQ1. The cofactor is Zn(2+).

It catalyses the reaction 7-aminomethyl-7-carbaguanine + guanosine(34) in tRNA = 7-aminomethyl-7-carbaguanosine(34) in tRNA + guanine. Its pathway is tRNA modification; tRNA-queuosine biosynthesis. Functionally, catalyzes the base-exchange of a guanine (G) residue with the queuine precursor 7-aminomethyl-7-deazaguanine (PreQ1) at position 34 (anticodon wobble position) in tRNAs with GU(N) anticodons (tRNA-Asp, -Asn, -His and -Tyr). Catalysis occurs through a double-displacement mechanism. The nucleophile active site attacks the C1' of nucleotide 34 to detach the guanine base from the RNA, forming a covalent enzyme-RNA intermediate. The proton acceptor active site deprotonates the incoming PreQ1, allowing a nucleophilic attack on the C1' of the ribose to form the product. After dissociation, two additional enzymatic reactions on the tRNA convert PreQ1 to queuine (Q), resulting in the hypermodified nucleoside queuosine (7-(((4,5-cis-dihydroxy-2-cyclopenten-1-yl)amino)methyl)-7-deazaguanosine). The chain is Queuine tRNA-ribosyltransferase from Streptococcus uberis (strain ATCC BAA-854 / 0140J).